Reading from the N-terminus, the 197-residue chain is Shikimate kinase (197 aa).

15–20 (GSGKSS) is a binding site for ATP. Ser19 contacts Mg(2+). Asp37, Arg61, and Gly83 together coordinate substrate. Arg121 is a binding site for ATP. Residue Arg148 participates in substrate binding.

It belongs to the shikimate kinase family. Monomer. Mg(2+) serves as cofactor.

The protein localises to the cytoplasm. The enzyme catalyses shikimate + ATP = 3-phosphoshikimate + ADP + H(+). It participates in metabolic intermediate biosynthesis; chorismate biosynthesis; chorismate from D-erythrose 4-phosphate and phosphoenolpyruvate: step 5/7. Its function is as follows. Catalyzes the specific phosphorylation of the 3-hydroxyl group of shikimic acid using ATP as a cosubstrate. This Chlorobium phaeovibrioides (strain DSM 265 / 1930) (Prosthecochloris vibrioformis (strain DSM 265)) protein is Shikimate kinase.